The primary structure comprises 230 residues: Protein tumorous testis (230 aa).

The 92-residue stretch at 37–128 (GELFLSCIPR…RELVLKNVES (92 aa)) folds into the RRM domain.

Part of a complex composed of at least tut, bam and bgcn; complex formation does not require RNA. Interacts with bam (via N-terminus); the interaction is direct. Interacts with bgcn; the interaction is indirect and is mediated by bam. As part of the bam-bgcn-tut complex associates with twin; may recruit the CCR4-NOT1 deadenylation complex to mRNA 3'UTRs to mediate post-transcriptional regulation of expression.

It localises to the cytoplasm. RNA binding protein that forms a complex with bam and bgcn, involved in 3'UTR-dependent regulation of a subset of mRNAs. Preferentially binds a long isoform of mei-P26 transcripts. Involved in 3'UTR-dependent post-transcriptional repression of several 3'-RNA processing factors. Involved in promoting germline stem cell lineage differentiation and mitosis-to-meiosis transition. Required for proper transit amplification of spermatogonia. The sequence is that of Protein tumorous testis from Drosophila melanogaster (Fruit fly).